We begin with the raw amino-acid sequence, 67 residues long: DNA-directed RNA polymerase subunit omega (67 aa).

Belongs to the RNA polymerase subunit omega family. In terms of assembly, the RNAP catalytic core consists of 2 alpha, 1 beta, 1 beta' and 1 omega subunit. When a sigma factor is associated with the core the holoenzyme is formed, which can initiate transcription.

The enzyme catalyses RNA(n) + a ribonucleoside 5'-triphosphate = RNA(n+1) + diphosphate. In terms of biological role, promotes RNA polymerase assembly. Latches the N- and C-terminal regions of the beta' subunit thereby facilitating its interaction with the beta and alpha subunits. The chain is DNA-directed RNA polymerase subunit omega from Methylibium petroleiphilum (strain ATCC BAA-1232 / LMG 22953 / PM1).